A 317-amino-acid polypeptide reads, in one-letter code: Membrane-associated protein VIPP1, chloroplastic (317 aa).

The stretch at 92–246 (EMNDDLTKMR…SQAEALGQLA (155 aa)) forms a coiled coil. The disordered stretch occupies residues 265-317 (DLAQMKKEISGSSSKGELPPGRTAVSNSGAARPFRDIEIENELNELRKKANEY). The segment covering 297–317 (PFRDIEIENELNELRKKANEY) has biased composition (basic and acidic residues).

It belongs to the PspA/Vipp/IM30 family. As to quaternary structure, homomultimer. Complex formation involves interaction via the central alpha-helical domain (71-286). In terms of assembly, (Microbial infection) Interacts with the rice tungro bacilliform virus (RTBV) capsid protein.

Its subcellular location is the plastid. It localises to the chloroplast inner membrane. It is found in the chloroplast thylakoid membrane. Its function is as follows. Required for plastid vesicle formation and thylakoid membrane biogenesis, but not for functional assembly of thylakoid protein complexes. The protein is Membrane-associated protein VIPP1, chloroplastic of Oryza sativa subsp. japonica (Rice).